Reading from the N-terminus, the 399-residue chain is Elongation factor Tu (399 aa).

One can recognise a tr-type G domain in the interval 10 to 209 (KPHVNIGTIG…AVDEYIPTPE (200 aa)). A G1 region spans residues 19 to 26 (GHVDHGKT). GTP is bound at residue 19–26 (GHVDHGKT). Threonine 26 lines the Mg(2+) pocket. Residues 60 to 64 (GITIN) form a G2 region. The interval 81–84 (DCPG) is G3. GTP-binding positions include 81–85 (DCPGH) and 136–139 (NKMD). Residues 136 to 139 (NKMD) form a G4 region. Positions 174-176 (SAL) are G5.

This sequence belongs to the TRAFAC class translation factor GTPase superfamily. Classic translation factor GTPase family. EF-Tu/EF-1A subfamily. As to quaternary structure, monomer.

It is found in the cytoplasm. The enzyme catalyses GTP + H2O = GDP + phosphate + H(+). Functionally, GTP hydrolase that promotes the GTP-dependent binding of aminoacyl-tRNA to the A-site of ribosomes during protein biosynthesis. The protein is Elongation factor Tu of Nautilia profundicola (strain ATCC BAA-1463 / DSM 18972 / AmH).